The sequence spans 31 residues: L-amino-acid oxidase (31 aa).

The protein belongs to the flavin monoamine oxidase family. FIG1 subfamily. As to quaternary structure, homodimer; non-covalently linked. It depends on FAD as a cofactor. In terms of processing, N-glycosylated. In terms of tissue distribution, expressed by the venom gland.

It localises to the secreted. It carries out the reaction an L-alpha-amino acid + O2 + H2O = a 2-oxocarboxylate + H2O2 + NH4(+). The enzyme catalyses L-leucine + O2 + H2O = 4-methyl-2-oxopentanoate + H2O2 + NH4(+). The catalysed reaction is L-phenylalanine + O2 + H2O = 3-phenylpyruvate + H2O2 + NH4(+). It catalyses the reaction L-histidine + O2 + H2O = 3-(imidazol-5-yl)pyruvate + H2O2 + NH4(+). Catalyzes an oxidative deamination of predominantly hydrophobic and aromatic L-amino acids, thus producing hydrogen peroxide that may contribute to the diverse toxic effects of this enzyme. Is moderately active on L-Leu, L-His, and L-Phe, and very weakly active on L-Thr, and L-Cys. Exhibits diverse biological activities, such as hemorrhage, hemolysis, edema, antibacterial and antiparasitic activities, as well as regulation of platelet aggregation. Its effect on platelets is controversial, since it either induces aggregation or inhibits agonist-induced aggregation. These different effects are probably due to different experimental conditions. Inhibits growth of B.subtilis strain ATCC 6633 (MIC=32 uM), E.faecalis strain ATCC 12953 (MIC=32 uM), S.aureus strain ATCC 29213 (MIC=32 uM), S.pyogenes strain ATCC 19615 (MIC=8 uM), E.coli strain ATCC 8739 (MIC=4 uM), K.pneumoniae strain ATCC 13885 (MIC=2 uM), P.mirabilis strain ATCC 25933 (MIC=2 uM), P.aeruginosa strain ATCC 15442 (MIC=8 uM) and S.typhimurium strain ATCC 14028 (MIC=8 uM). This Bothrops mattogrossensis (Pitviper) protein is L-amino-acid oxidase.